A 553-amino-acid chain; its full sequence is Putative transport protein CKO_00031 (553 aa).

The next 5 helical transmembrane spans lie at 4 to 24, 28 to 48, 65 to 85, 95 to 115, and 158 to 178; these read IALT…IGNI, GVGF…HFVD, FGLI…FFAS, LFAI…HKIF, and MSYA…MWLM. RCK C-terminal domains are found at residues 192 to 276 and 279 to 361; these read QHED…VIGQ and DTSL…VVGN. The next 6 membrane-spanning stretches (helical) occupy residues 371 to 391, 393 to 413, 437 to 457, 464 to 484, 493 to 513, and 533 to 553; these read MLPV…PLFV, GFPV…ALIL, LGIV…FIDT, LSWI…VGLL, YLTL…LAFA, and LVMF…WGLG.

The protein belongs to the AAE transporter (TC 2.A.81) family. YidE subfamily.

It localises to the cell membrane. This chain is Putative transport protein CKO_00031, found in Citrobacter koseri (strain ATCC BAA-895 / CDC 4225-83 / SGSC4696).